We begin with the raw amino-acid sequence, 349 residues long: NADH-quinone oxidoreductase subunit H (349 aa).

The next 8 membrane-spanning stretches (helical) occupy residues 11–31, 83–103, 116–136, 162–182, 200–220, 252–272, 288–308, and 323–343; these read FPLLIIVGKTLLLLVILLLLV, GVFLLAPFVSATLALSTWAVI, VGLLYILAISSLEVYGVIMGG, IGFVLVTVILVSGSLDLTTIV, FLDWNWLVLFPMFIIFFISAL, LFFLGEYVAIVLMCALTTILF, VPGIIWFVLKVCFVFFWFAMV, and LGWKVFLPLSLAMVVITAAFL.

The protein belongs to the complex I subunit 1 family. In terms of assembly, NDH-1 is composed of 14 different subunits. Subunits NuoA, H, J, K, L, M, N constitute the membrane sector of the complex.

Its subcellular location is the cell inner membrane. It catalyses the reaction a quinone + NADH + 5 H(+)(in) = a quinol + NAD(+) + 4 H(+)(out). Functionally, NDH-1 shuttles electrons from NADH, via FMN and iron-sulfur (Fe-S) centers, to quinones in the respiratory chain. The immediate electron acceptor for the enzyme in this species is believed to be ubiquinone. Couples the redox reaction to proton translocation (for every two electrons transferred, four hydrogen ions are translocated across the cytoplasmic membrane), and thus conserves the redox energy in a proton gradient. This subunit may bind ubiquinone. The chain is NADH-quinone oxidoreductase subunit H from Bartonella henselae (strain ATCC 49882 / DSM 28221 / CCUG 30454 / Houston 1) (Rochalimaea henselae).